Here is a 145-residue protein sequence, read N- to C-terminus: Probable WRKY transcription factor 75 (145 aa).

Positions 20 to 38 (SKPELHQGEEESSKVRSEG) are enriched in basic and acidic residues. The tract at residues 20–55 (SKPELHQGEEESSKVRSEGCSKSVESSKKKGKKQRY) is disordered. Residues 61–126 (SQVDILDDGY…YEGVHSHPIE (66 aa)) constitute a DNA-binding region (WRKY).

The protein belongs to the WRKY group II-c family.

It is found in the nucleus. Its function is as follows. Transcription factor. Interacts specifically with the W box (5'-(T)TGAC[CT]-3'), a frequently occurring elicitor-responsive cis-acting element. The protein is Probable WRKY transcription factor 75 (WRKY75) of Arabidopsis thaliana (Mouse-ear cress).